A 218-amino-acid polypeptide reads, in one-letter code: Transmembrane gamma-carboxyglutamic acid protein 1 (218 aa).

A propeptide spanning residues 1-20 is cleaved from the precursor; the sequence is MGRIFLTGEKANSVLKRYPR. The region spanning 20–66 is the Gla domain; that stretch reads RANGLFEEIRQGNIERECKEEVCTFEEAREAFENNEKTKEFWNTYTK. The Extracellular portion of the chain corresponds to 21–80; that stretch reads ANGLFEEIRQGNIERECKEEVCTFEEAREAFENNEKTKEFWNTYTKAQQGESNRGSDWFQ. The cysteines at positions 37 and 42 are disulfide-linked. Residues 81 to 101 form a helical membrane-spanning segment; it reads FYLTFPLIFGLFIILLVIFLI. Residues 102 to 218 lie on the Cytoplasmic side of the membrane; that stretch reads WRCFLRNKTR…AMVPVATTIK (117 aa). The interval 160 to 192 is disordered; sequence STRLSNCDPPPTYEEATGQMNLRRSETEPHLDP. Basic and acidic residues predominate over residues 182–192; the sequence is RRSETEPHLDP.

Post-translationally, gla residues are produced after subsequent post-translational modifications of glutamate by a vitamin K-dependent gamma-carboxylase.

It is found in the membrane. This is Transmembrane gamma-carboxyglutamic acid protein 1 (PRRG1) from Bos taurus (Bovine).